A 468-amino-acid polypeptide reads, in one-letter code: Glutamate--tRNA ligase (468 aa).

A 'HIGH' region motif is present at residues 12 to 22 (PSPTGFIHLGN). The 'KMSKS' region motif lies at 244–248 (KMSKR). Lys247 contacts ATP.

Belongs to the class-I aminoacyl-tRNA synthetase family. Glutamate--tRNA ligase type 1 subfamily. Monomer.

The protein localises to the cytoplasm. It catalyses the reaction tRNA(Glu) + L-glutamate + ATP = L-glutamyl-tRNA(Glu) + AMP + diphosphate. In terms of biological role, catalyzes the attachment of glutamate to tRNA(Glu) in a two-step reaction: glutamate is first activated by ATP to form Glu-AMP and then transferred to the acceptor end of tRNA(Glu). The protein is Glutamate--tRNA ligase of Polynucleobacter asymbioticus (strain DSM 18221 / CIP 109841 / QLW-P1DMWA-1) (Polynucleobacter necessarius subsp. asymbioticus).